The chain runs to 580 residues: Rho guanine nucleotide exchange factor 25 (580 aa).

Residues 48–67 (AASGLAAPSGPSSGLSSGPC) are compositionally biased toward low complexity. Disordered stretches follow at residues 48–76 (AASG…GPVS) and 128–157 (LEGP…KKKA). Positions 160–336 (RSMYVLSELV…CFVPKRCNDM (177 aa)) constitute a DH domain. Residues 278–299 (LGHRLQLNDLLIKPVQRIMKYQ) are important for binding to Rho GTPases. One can recognise a PH domain in the interval 348–466 (KLTAQGKLLG…WIKHVAQILE (119 aa)). The segment at 467-493 (SQRDFLNALQSPIEYQRRESQTNSLGR) is sufficient to bind activated GNAQ. Disordered stretches follow at residues 482–524 (QRRE…GSLP) and 545–580 (ALGD…EDEL). Over residues 509–520 (DQAQGSTHTPIN) the composition is skewed to polar residues. Over residues 555-566 (DSPPVSPTPKTP) the composition is skewed to pro residues.

In terms of assembly, interacts (via the DH domain) with POPDC1 (via the C-terminus cytoplasmic tail). Interacts with activated GNAQ and GNA11. Interacts with RHOA, CDC42 and RAC1. In terms of tissue distribution, isoform 1 and isoform 2 are highly expressed in excitable tissues, such as brain, heart and muscle. Also detected in kidney and liver.

The protein localises to the cell membrane. It localises to the cytoplasm. The protein resides in the myofibril. Its subcellular location is the sarcomere. May play a role in actin cytoskeleton reorganization in different tissues since its activation induces formation of actin stress fibers. It works as a guanine nucleotide exchange factor for Rho family of small GTPases. Links specifically G alpha q/11-coupled receptors to RHOA activation. May be an important regulator of processes involved in axon and dendrite formation. In neurons seems to be an exchange factor primarily for RAC1. Involved in skeletal myogenesis. The sequence is that of Rho guanine nucleotide exchange factor 25 (ARHGEF25) from Homo sapiens (Human).